Reading from the N-terminus, the 321-residue chain is Basic endochitinase A (321 aa).

The N-terminal stretch at methionine 1–alanine 19 is a signal peptide. Residues glutamate 20–glycine 60 form the Chitin-binding type-1 domain. 5 disulfides stabilise this stretch: cysteine 22-cysteine 37, cysteine 31-cysteine 43, cysteine 34-cysteine 61, cysteine 36-cysteine 50, and cysteine 54-cysteine 58. Residues glycine 62–glycine 79 form a hinge region (Gly/Pro/Thr-rich) region. The catalytic stretch occupies residues valine 80–alanine 321. Cystine bridges form between cysteine 101/cysteine 163, cysteine 175/cysteine 183, and cysteine 301/cysteine 314. Glutamate 145 acts as the Proton donor in catalysis.

It belongs to the glycosyl hydrolase 19 family. Chitinase class I subfamily. Localized in the aleurone cells of the seed endosperm (at protein level).

It carries out the reaction Random endo-hydrolysis of N-acetyl-beta-D-glucosaminide (1-&gt;4)-beta-linkages in chitin and chitodextrins.. Defense against chitin-containing fungal pathogens. Binds the hyphal tips, lateral walls and septa of fungi and degrades mature chitin. The protein is Basic endochitinase A of Secale cereale (Rye).